The following is a 293-amino-acid chain: uncharacterized protein (293 aa).

Residue Asp-119 is part of the active site.

The protein belongs to the pseudouridine synthase RluA family.

It catalyses the reaction a uridine in RNA = a pseudouridine in RNA. This is an uncharacterized protein from Helicobacter pylori (strain J99 / ATCC 700824) (Campylobacter pylori J99).